Here is a 256-residue protein sequence, read N- to C-terminus: Trypsin, alkaline A (256 aa).

The N-terminal stretch at 1–17 (MRLFLALLALGFAAVAA) is a signal peptide. Residues 18 to 24 (VPAYPQR) constitute a propeptide, activation peptide. The 232-residue stretch at 25-256 (IVGGSTTTIQ…RFANWIRNNS (232 aa)) folds into the Peptidase S1 domain. A disulfide bridge links C55 with C71. Active-site charge relay system residues include H70 and D115. Cystine bridges form between C180–C197 and C209–C233. The Charge relay system role is filled by S213.

The protein belongs to the peptidase S1 family. Midgut.

The protein resides in the secreted. The protein localises to the extracellular space. The enzyme catalyses Preferential cleavage: Arg-|-Xaa, Lys-|-Xaa.. The polypeptide is Trypsin, alkaline A (Manduca sexta (Tobacco hawkmoth)).